We begin with the raw amino-acid sequence, 245 residues long: Flavin mononucleotide hydrolase 1, chloroplatic (245 aa).

The N-terminal 26 residues, 1-26 (MAAAAMHTSAEFINLKPNMWKKNPVR), are a transit peptide targeting the chloroplast.

Belongs to the HAD-like hydrolase superfamily. DOG/GPP family. In terms of assembly, homodimer. The cofactor is Mg(2+).

It localises to the plastid. Its subcellular location is the chloroplast stroma. It carries out the reaction FMN + H2O = riboflavin + phosphate. The catalysed reaction is 5-amino-6-(5-phospho-D-ribitylamino)uracil + H2O = 5-amino-6-(D-ribitylamino)uracil + phosphate. FMN hydrolase that catalyzes the dephosphorylation of flavin mononucleotide (FMN) to riboflavin. Can also dephosphorylate 5-amino-6-(5-phospho-D-ribitylamino)uracil, also known as ARPP. Not required for riboflavin biosynthesis in planta, but may help maintaining flavin homeostasis within chloroplasts. This chain is Flavin mononucleotide hydrolase 1, chloroplatic, found in Arabidopsis thaliana (Mouse-ear cress).